The following is a 192-amino-acid chain: Pyridoxal 5'-phosphate synthase subunit PdxT (192 aa).

Residue 46 to 48 (GES) coordinates L-glutamine. C75 functions as the Nucleophile in the catalytic mechanism. L-glutamine contacts are provided by residues R101 and 129 to 130 (IR). Active-site charge relay system residues include H166 and E168.

The protein belongs to the glutaminase PdxT/SNO family. In terms of assembly, in the presence of PdxS, forms a dodecamer of heterodimers. Only shows activity in the heterodimer.

The enzyme catalyses aldehydo-D-ribose 5-phosphate + D-glyceraldehyde 3-phosphate + L-glutamine = pyridoxal 5'-phosphate + L-glutamate + phosphate + 3 H2O + H(+). It catalyses the reaction L-glutamine + H2O = L-glutamate + NH4(+). The protein operates within cofactor biosynthesis; pyridoxal 5'-phosphate biosynthesis. In terms of biological role, catalyzes the hydrolysis of glutamine to glutamate and ammonia as part of the biosynthesis of pyridoxal 5'-phosphate. The resulting ammonia molecule is channeled to the active site of PdxS. This chain is Pyridoxal 5'-phosphate synthase subunit PdxT, found in Staphylococcus carnosus (strain TM300).